The sequence spans 757 residues: MFKIIKKSIEWGGRALSLETGKIARQAHGSVVVNYGDTSVLVTVVRKKKEESVDFLPLNVQFIAKSYAMGKIPGGFFKREGKPSDRETLISRVIDRSIRPLFPEGFHDEISVVCNLLTYDTVNPPEVPALIGAVAALAISGVPFHFTIAGVMVGCDENNNYILNPSVQEMKASSLDLFLSGDENSILMVESEVKELSEENVFNAIKFGHEHLKPVIKLIKEFADTIGNKPESFAPIDASDITQELEKYGKDFEKAYSQTVKQERVQALEAIRENILNTLKETGKDEKLITYAVKNFERSLVREIIRKKSVRIDGRKHDEIRQIEVEVDILSKTHGSALFTRGNTQALVVTALGTTQDEQIVDDIEGDRREHFMLHYNFPSFAVGETSAARAPGRREIGHGKLAWKAIHPVLPDKSEFPYTIRVVSEILESDGSSSMATVCGTSLALMDTGVPIKAPVAGIAMGLIKDKDEYVILSDILGDEDYLGDMDFKVAGTSEGVTALQMDMKISGISFEIVEKSLEQAKAGRLHILEKMNAVISEHSDDVKDHAPRMLSFYIDKDKISAAIGSKGKNIRSVCERSNAKIEIGDDGKVSVFATSGTEAEIAKSMMIDSITELEQGSIVDVKVVRIEKSIVELEFLNGRKGKMHISEVANEHIDSIESVLKQDDTFKALVIDFEKGGCPKLSRRRVDQETGEFFEGELYNEERKDGPNDRDNYYNNSFSRKPGGSHHKRPPRPHSGFSNRNRPKFGNNDSSSGFY.

Positions 482 and 488 each coordinate Mg(2+). Residues 549 to 608 (PRMLSFYIDKDKISAAIGSKGKNIRSVCERSNAKIEIGDDGKVSVFATSGTEAEIAKSMM) form the KH domain. The region spanning 618 to 686 (GSIVDVKVVR…KGGCPKLSRR (69 aa)) is the S1 motif domain. Residues 698–757 (GELYNEERKDGPNDRDNYYNNSFSRKPGGSHHKRPPRPHSGFSNRNRPKFGNNDSSSGFY) are disordered. The segment covering 702–714 (NEERKDGPNDRDN) has biased composition (basic and acidic residues). A compositionally biased stretch (basic residues) spans 725–734 (GGSHHKRPPR).

This sequence belongs to the polyribonucleotide nucleotidyltransferase family. It depends on Mg(2+) as a cofactor.

Its subcellular location is the cytoplasm. It carries out the reaction RNA(n+1) + phosphate = RNA(n) + a ribonucleoside 5'-diphosphate. Its function is as follows. Involved in mRNA degradation. Catalyzes the phosphorolysis of single-stranded polyribonucleotides processively in the 3'- to 5'-direction. The sequence is that of Polyribonucleotide nucleotidyltransferase from Wolbachia pipientis wMel.